Here is a 632-residue protein sequence, read N- to C-terminus: Arginyl-tRNA--protein transferase 1 (632 aa).

Residues 1-18 (MSLKNDASSSHDGGSNRE) show a composition bias toward polar residues. 4 disordered regions span residues 1–27 (MSLKNDASSSHDGGSNRESVIDDHGRR), 113–144 (KLDVQPREQRGASSSGDVSDTRRKTLGAAKSE), 284–312 (NGNISRGANSLDGSETLHAKKDSENHQAR), and 517–580 (PAAS…NDIN). The span at 113 to 122 (KLDVQPREQR) shows a compositional bias: basic and acidic residues. Residues 285-296 (GNISRGANSLDG) are compositionally biased toward polar residues. Residues 298–310 (ETLHAKKDSENHQ) show a composition bias toward basic and acidic residues. The span at 538–563 (SDEDEDEDEDDDDDDDDDEEMYETES) shows a compositional bias: acidic residues. Residues 564–578 (EDSHIESDPGSKDND) show a composition bias toward basic and acidic residues.

Belongs to the R-transferase family.

The enzyme catalyses an N-terminal L-alpha-aminoacyl-[protein] + L-arginyl-tRNA(Arg) = an N-terminal L-arginyl-L-aminoacyl-[protein] + tRNA(Arg) + H(+). Its function is as follows. Involved in the post-translational conjugation of arginine to the N-terminal aspartate or glutamate of a protein. This arginylation is required for degradation of the protein via the ubiquitin pathway. Component of the N-end rule pathway with ATE2 and PRT6. The N-end rule pathway regulates seed after-ripening, seedling sugar sensitivity, seedling lipid breakdown, and abscisic acid (ABA) sensitivity of germination. The end-rule pathway regulates various aspects of leaf and shoot development. Involved in the oxygen-dependent N-arginylation of RAP2-12, an activator of hypoxic gene expression. This N-terminal modification leads to ubiquitination by PRT6 and subsequent degradation of RAP2-12 under aerobic conditions. Has an important role in the progression of leaf senescence. Involved in disease resistance. The end-rule pathway plays a role in regulating the timing and amplitude of the immune response following infection with the bacterial pathogen Pseudomonas syringae pv tomato. Regulates the biosynthesis of plant-defense metabolites such as glucosinolates, and the biosynthesis and response to the phytohormone jasmonate (JA), which plays a key role in plant immunity. The chain is Arginyl-tRNA--protein transferase 1 from Arabidopsis thaliana (Mouse-ear cress).